Reading from the N-terminus, the 350-residue chain is C-X-C chemokine receptor type 1 (350 aa).

Residues 1-39 lie on the Extracellular side of the membrane; sequence MSNITDPQMWDFDDLNFTGMPPADEDYSPCMLETETLNK. Residues Asn3 and Asn16 are each glycosylated (N-linked (GlcNAc...) asparagine). A helical membrane pass occupies residues 40-66; that stretch reads YVVIIAYALVFLLSLLGNSLVMLVILY. The Cytoplasmic segment spans residues 67-75; that stretch reads SRVGRSVTD. Residues 76-96 form a helical membrane-spanning segment; sequence VYLLNLALADLLFALTLPIWA. Over 97–111 the chain is Extracellular; that stretch reads ASKVNGWIFGTFLCK. The cysteines at positions 110 and 187 are disulfide-linked. The helical transmembrane segment at 112–133 threads the bilayer; that stretch reads VVSLLKEVNFYSGILLLACISV. Residues 134 to 154 lie on the Cytoplasmic side of the membrane; that stretch reads DRYLAIVHATRTLTQKRHLVK. The helical transmembrane segment at 155-174 threads the bilayer; that stretch reads FVCLGCWGLSMNLSLPFFLF. Over 175-199 the chain is Extracellular; sequence RQAYHPNNSSPVCYEVLGNDTAKWR. The helical transmembrane segment at 200 to 220 threads the bilayer; sequence MVLRILPHTFGFIVPLFVMLF. Residues 221 to 242 are Cytoplasmic-facing; sequence CYGFTLRTLFKAHMGQKHRAMR. The chain crosses the membrane as a helical span at residues 243 to 264; the sequence is VIFAVVLIFLLCWLPYNLVLLA. Over 265–285 the chain is Extracellular; the sequence is DTLMRTQVIQESCERRNNIGR. Residues 286 to 308 form a helical membrane-spanning segment; it reads ALDATEILGFLHSCLNPIIYAFI. Topologically, residues 309 to 350 are cytoplasmic; that stretch reads GQNFRHGFLKILAMHGLVSKEFLARHRVTSYTSSSVNVSSNL.

It belongs to the G-protein coupled receptor 1 family. In terms of assembly, interacts with IL8. Interacts with GNAI2.

It localises to the cell membrane. In terms of biological role, receptor to interleukin-8, which is a powerful neutrophils chemotactic factor. Binding of IL-8 to the receptor causes activation of neutrophils. This response is mediated via a G-protein that activates a phosphatidylinositol-calcium second messenger system. The protein is C-X-C chemokine receptor type 1 (CXCR1) of Homo sapiens (Human).